The sequence spans 98 residues: Alpha-elicitin DRE-alpha (98 aa).

Disulfide bonds link Cys3-Cys71, Cys27-Cys56, and Cys51-Cys95.

It belongs to the elicitin family.

The protein resides in the secreted. Its function is as follows. Induces local and distal defense responses (incompatible hypersensitive reaction) in plants from the solanaceae and cruciferae families. Elicits leaf necrosis and causes the accumulation of pathogenesis-related proteins. Might interact with the lipidic molecules of the plasma membrane. This is Alpha-elicitin DRE-alpha from Phytophthora drechsleri.